The sequence spans 231 residues: Small ribosomal subunit protein uS3 (231 aa).

Positions valine 17–alanine 86 constitute a KH type-2 domain.

Belongs to the universal ribosomal protein uS3 family. In terms of assembly, part of the 30S ribosomal subunit.

Binds the lower part of the 30S subunit head. This Methanocorpusculum labreanum (strain ATCC 43576 / DSM 4855 / Z) protein is Small ribosomal subunit protein uS3.